A 357-amino-acid chain; its full sequence is CCN family member 3 (357 aa).

The signal sequence occupies residues 1–31; it reads MQSVQSTSFCLRKQCLCLTFLLLHLLGQVAA. Positions 32-105 constitute an IGFBP N-terminal domain; the sequence is TQRCPPQCPG…SNQTGICTAV (74 aa). 6 cysteine pairs are disulfide-bonded: Cys35–Cys61, Cys39–Cys63, Cys43–Cys64, Cys50–Cys67, Cys75–Cys89, and Cys81–Cys102. Asn97 carries N-linked (GlcNAc...) asparagine glycosylation. A VWFC domain is found at 108-174; sequence DNCVFDGVIY…GECCEKWICG (67 aa). The TSP type-1 domain occupies 205-250; it reads NCIEQTTEWTACSKSCGMGFSTRVTNRNRQCEMLKQTRLCMVRPCE. Cys244 carries S-palmitoyl cysteine lipidation. Disulfide bonds link Cys264–Cys301, Cys281–Cys315, Cys292–Cys331, Cys295–Cys333, and Cys300–Cys337. The CTCK domain occupies 264-338; the sequence is CLRTKKSLKA…GTCTCHTNCP (75 aa). A glycan (N-linked (GlcNAc...) asparagine) is linked at Asn280.

The protein belongs to the CCN family. Interacts with FBLN1. Interacts (via CTCK domain) with NOTCH1 (via the EGF-like repeat region). Interacts with GJA1/CX43. Interacts with ITGA5:ITGB1, ITGAV:ITGB3 and ITGAV:ITGB5. Interacts with ZDHHC22; the interaction may lead to CCN3 palmitoylation. May be palmitoylated on Cys-244, which is important for extracellular secretion. In terms of tissue distribution, expressed in endothelial cells (at protein level). Expressed in bone marrow and thymic cells.

It localises to the secreted. The protein localises to the cytoplasm. The protein resides in the cell junction. Its subcellular location is the gap junction. In terms of biological role, immediate-early protein playing a role in various cellular processes including proliferation, adhesion, migration, differentiation and survival. Acts by binding to integrins or membrane receptors such as NOTCH1. Essential regulator of hematopoietic stem and progenitor cell function. Inhibits myogenic differentiation through the activation of Notch-signaling pathway. Inhibits vascular smooth muscle cells proliferation by increasing expression of cell-cycle regulators such as CDKN2B or CDKN1A independently of TGFB1 signaling. Ligand of integrins ITGAV:ITGB3 and ITGA5:ITGB1, acts directly upon endothelial cells to stimulate pro-angiogenic activities and induces angiogenesis. In endothelial cells, supports cell adhesion, induces directed cell migration (chemotaxis) and promotes cell survival. Also plays a role in cutaneous wound healing acting as integrin receptor ligand. Supports skin fibroblast adhesion through ITGA5:ITGB1 and ITGA6:ITGB1 and induces fibroblast chemotaxis through ITGAV:ITGB5. Seems to enhance bFGF-induced DNA synthesis in fibroblasts. Involved in bone regeneration as a negative regulator. Enhances the articular chondrocytic phenotype, whereas it repressed the one representing endochondral ossification. Impairs pancreatic beta-cell function, inhibits beta-cell proliferation and insulin secretion. Plays a role as negative regulator of endothelial pro-inflammatory activation reducing monocyte adhesion, its anti-inflammatory effects occur secondary to the inhibition of NF-kappaB signaling pathway. Contributes to the control and coordination of inflammatory processes in atherosclerosis. Attenuates inflammatory pain through regulation of IL1B- and TNF-induced MMP9, MMP2 and CCL2 expression. Inhibits MMP9 expression through ITGB1 engagement. Brain osteoanabolic hormone. Drives osteogenesis in osteochondral skeletal stem cells. During lactation, maintains the maternal skeleton and viability of offspring. In Homo sapiens (Human), this protein is CCN family member 3.